The following is a 148-amino-acid chain: Deoxyuridine 5'-triphosphate nucleotidohydrolase (148 aa).

Residues 67-69 (RSG), Asn80, 84-86 (TID), and Lys94 contribute to the substrate site.

The protein belongs to the dUTPase family. Mg(2+) serves as cofactor.

It carries out the reaction dUTP + H2O = dUMP + diphosphate + H(+). Its pathway is pyrimidine metabolism; dUMP biosynthesis; dUMP from dCTP (dUTP route): step 2/2. This enzyme is involved in nucleotide metabolism: it produces dUMP, the immediate precursor of thymidine nucleotides and it decreases the intracellular concentration of dUTP so that uracil cannot be incorporated into DNA. The protein is Deoxyuridine 5'-triphosphate nucleotidohydrolase of Orientia tsutsugamushi (strain Ikeda) (Rickettsia tsutsugamushi).